A 20-amino-acid chain; its full sequence is Ribosome-inactivating protein (20 aa).

Positions 1–20 (NVRFDLSGATSSSYKTFIKN) are disordered. Over residues 8-20 (GATSSSYKTFIKN) the composition is skewed to polar residues.

It belongs to the ribosome-inactivating protein family. Type 1 RIP subfamily.

It carries out the reaction Endohydrolysis of the N-glycosidic bond at one specific adenosine on the 28S rRNA.. The chain is Ribosome-inactivating protein from Cucurbita pepo (Vegetable marrow).